The following is a 500-amino-acid chain: UPF0371 protein SZO_06760 (500 aa).

It belongs to the UPF0371 family.

The polypeptide is UPF0371 protein SZO_06760 (Streptococcus equi subsp. zooepidemicus (strain H70)).